Consider the following 185-residue polypeptide: MQVSVECQKRPENINPRALRRQGLIPAVLYGHNGTESISLVVGEKAALTLLKKASVNNTLVDVNVPEMPWTGKALIQEVQSHPWKRNLYHLSFFSVSAHGKLDIVVPIKAIGEAIGTKQGGLIEQFVNEVNVSCIADNIPEVIEFDVSEIGVGQSLLVGDLKMPEGVTLKDDPHTTVFAIVAAKR.

The protein belongs to the bacterial ribosomal protein bL25 family. CTC subfamily. Part of the 50S ribosomal subunit; part of the 5S rRNA/L5/L18/L25 subcomplex. Contacts the 5S rRNA. Binds to the 5S rRNA independently of L5 and L18.

In terms of biological role, this is one of the proteins that binds to the 5S RNA in the ribosome where it forms part of the central protuberance. This is Large ribosomal subunit protein bL25 from Microcystis aeruginosa (strain NIES-843 / IAM M-2473).